The chain runs to 574 residues: ESX-1 secretion system protein EccA1 (574 aa).

335–342 (GPPGTGKT) contacts ATP.

The protein belongs to the CbxX/CfxQ family. As to quaternary structure, part of the ESX-1 / type VII secretion system (T7SS), which is composed of cytosolic and membrane components.

The protein resides in the cytoplasm. Its function is as follows. Part of the ESX-1 / type VII specialized secretion system (T7SS), which exports several proteins including EsxA and EsxB. Plays a role in DNA conjugation, in both donor and recipient strains. EccA1 exhibits ATPase activity and may provide energy for the export of ESX-1 substrates. The sequence is that of ESX-1 secretion system protein EccA1 from Mycolicibacterium smegmatis (strain ATCC 700084 / mc(2)155) (Mycobacterium smegmatis).